The primary structure comprises 268 residues: GTP cyclohydrolase FolE2 (268 aa).

Belongs to the GTP cyclohydrolase IV family.

The catalysed reaction is GTP + H2O = 7,8-dihydroneopterin 3'-triphosphate + formate + H(+). Its pathway is cofactor biosynthesis; 7,8-dihydroneopterin triphosphate biosynthesis; 7,8-dihydroneopterin triphosphate from GTP: step 1/1. Converts GTP to 7,8-dihydroneopterin triphosphate. This is GTP cyclohydrolase FolE2 from Methylococcus capsulatus (strain ATCC 33009 / NCIMB 11132 / Bath).